The primary structure comprises 1065 residues: N-terminal acetyltransferase B complex auxiliary subunit NAA25 (1065 aa).

Residues 294 to 327 (VDKLRIQGRLLARANDYSAAVDVYKKILELSPDD) form a TPR repeat.

The protein belongs to the MDM20/NAA25 family. Ubiquitously expressed, with a higher expression in vascular bundles, hydathodes, leaf primordia and the base of the trichomes.

It localises to the cytoplasm. Its function is as follows. Auxiliary subunit of the NatB N-alpha-acetyltransferase complex. Required for flowering time regulation and for vegetative and reproductive plant development. This chain is N-terminal acetyltransferase B complex auxiliary subunit NAA25, found in Arabidopsis thaliana (Mouse-ear cress).